The primary structure comprises 1147 residues: Multiple epidermal growth factor-like domains protein 10 (1147 aa).

The N-terminal stretch at 1–25 (MAISSSSCLGLICSLLCHWVGTASS) is a signal peptide. The necessary for interaction with AP2M1, self-assembly and formation of the irregular, mosaic-like adhesion pattern stretch occupies residues 1–857 (MAISSSSCLG…ALPADSYQIG (857 aa)). The Extracellular portion of the chain corresponds to 26 to 857 (LNLEDPNVCS…ALPADSYQIG (832 aa)). The EMI domain occupies 30-107 (DPNVCSHWES…FYESRDMCVP (78 aa)). Intrachain disulfides connect C34-C95, C60-C69, C94-C105, C109-C124, C126-C135, C148-C160, C154-C167, C169-C178, C191-C203, C197-C210, C212-C221, C234-C246, C240-C253, C255-C264, C281-C289, C283-C296, C298-C307, C320-C332, C326-C339, C341-C350, C409-C421, C415-C428, C430-C439, C456-C464, C458-C471, C473-C482, C495-C507, C501-C514, C516-C525, C542-C550, C544-C557, C559-C568, C581-C593, C587-C600, C602-C611, C669-C681, C675-C688, C690-C699, C716-C724, C718-C731, C733-C742, C755-C767, C761-C774, C776-C785, C802-C810, C804-C817, and C819-C828. 15 EGF-like domains span residues 101–136 (SRDM…TNCS), 144–179 (WGPH…WRCE), 187–222 (YGND…AFCE), 230–265 (HGPH…TVCG), 278–308 (SQEC…ERCQ), 316–351 (YGVR…ELCE), 405–440 (YGEA…TDCS), 453–483 (SSRC…VDCS), 491–526 (WGFG…AKCE), 539–569 (AERC…VHCD), 577–612 (WGPN…TTCQ), 665–700 (FGKN…SDCS), 713–743 (IHTC…LYCT), 751–786 (YGKD…RHCE), and 799–829 (RQIC…ARCD). N-linked (GlcNAc...) asparagine glycosylation occurs at N134. A glycan (N-linked (GlcNAc...) asparagine) is linked at N496. Residues 858 to 878 (AIAGIVVLVLVVLFLLALFII) form a helical membrane-spanning segment. The Cytoplasmic portion of the chain corresponds to 879 to 1147 (YRHKQKRKES…STSSSSSSSE (269 aa)). A necessary for formation of large intracellular vacuoles region spans residues 945 to 1147 (RDRMTIAKSK…STSSSSSSSE (203 aa)). A Phosphotyrosine modification is found at Y1030. Residues 1093–1147 (HVTQDPYDLPKNSHIPCHYDLLPVRDSSSSPKREDGGGSNSTSSNSTSSSSSSSE) are disordered. The segment covering 1132-1147 (NSTSSNSTSSSSSSSE) has biased composition (low complexity).

The protein belongs to the MEGF family. Homomer. Interacts with GULP1 and ABCA1. Interacts with AP2M1. Does not interact with MEGF11. Binds with high affinity to complement C1q. Interacts (via the cytoplasmic domain) with NOTCH1 (via NICD domain). Ubiquitinated; mono- and polyubiquitinated forms are detected. In terms of processing, phosphorylated on tyrosine residues. Phosphorylation at Tyr-1030 may be important for muscle cell proliferation. Expressed in cerebellum (at protein level). Expressed in kidney, stellate cells of the cerebellum and macrophage cell lines.

The protein localises to the cell membrane. It localises to the cell projection. Its subcellular location is the phagocytic cup. Membrane receptor involved in phagocytosis by macrophages and astrocytes of apoptotic cells. Receptor for C1q, an eat-me signal, that binds phosphatidylserine expressed on the surface of apoptotic cells. Cooperates with ABCA1 within the process of engulfment. Promotes the formation of large intracellular vacuoles and may be responsible for the uptake of amyloid-beta peptides. Necessary for astrocyte-dependent apoptotic neuron clearance in the developing cerebellum. Plays a role in muscle cell proliferation, adhesion and motility. Is also an essential factor in the regulation of myogenesis. Controls the balance between skeletal muscle satellite cells proliferation and differentiation through regulation of the notch signaling pathway. May also function in the mosaic spacing of specific neuron subtypes in the retina through homotypic retinal neuron repulsion. Mosaics provide a mechanism to distribute each cell type evenly across the retina, ensuring that all parts of the visual field have access to a full set of processing elements. In Mus musculus (Mouse), this protein is Multiple epidermal growth factor-like domains protein 10.